Consider the following 423-residue polypeptide: NDP-N-acetyl-D-galactosaminuronic acid dehydrogenase (423 aa).

11–28 (TISVVGLGYIGLPTATVL) serves as a coordination point for NAD(+). K218 (proton donor/acceptor) is an active-site residue. C272 serves as the catalytic Nucleophile.

This sequence belongs to the UDP-glucose/GDP-mannose dehydrogenase family.

Its function is as follows. Probably involved in the synthesis of sugar components of EPS I, by converting NDP-N-acetyl-D-galactosamine into NDP-N-acetyl-D-galactosaminuronic acid. This is NDP-N-acetyl-D-galactosaminuronic acid dehydrogenase (epsD) from Ralstonia nicotianae (strain ATCC BAA-1114 / GMI1000) (Ralstonia solanacearum).